An 847-amino-acid chain; its full sequence is Ras GTPase-activating protein 2 (847 aa).

Low complexity predominate over residues 1–18; sequence MAAAAPAAAALTEAPAVP. Residues 1–31 form a disordered region; sequence MAAAAPAAAALTEAPAVPGTAEPETGDEDSR. N-acetylalanine is present on alanine 2. C2 domains follow at residues 19–137 and 148–288; these read GTAE…ETWF and VQGK…QAWY. One can recognise a Ras-GAP domain in the interval 371–588; it reads NKLVPFITAV…TDVKKFLDEI (218 aa). A Phosphoserine modification is found at serine 554. The PH domain maps to 603-704; the sequence is VHLKEGEMYK…WIDMLCRVSR (102 aa). The Btk-type zinc finger occupies 706-742; that stretch reads NHNRLSSFHPSAYLNGNWLCCQETSEGTPGCKPCTAG. Histidine 714, cysteine 725, cysteine 726, and cysteine 736 together coordinate Zn(2+). The segment at 819-847 is disordered; that stretch reads DEPHEKYRKKRSSSAKYGSKENPIVGKIS.

As to expression, widely expressed. Higher expression in brain, placenta, and kidney.

The protein localises to the cell membrane. Its function is as follows. Inhibitory regulator of the Ras-cyclic AMP pathway. May bind inositol tetrakisphosphate (IP4) and phospholipids. The sequence is that of Ras GTPase-activating protein 2 (Rasa2) from Rattus norvegicus (Rat).